Reading from the N-terminus, the 449-residue chain is UDP-glycosyltransferase 74F2 (449 aa).

UDP-alpha-D-glucose contacts are provided by residues S273, 325 to 327, 342 to 350, and 364 to 367; these read SPQ, HCGWNSTME, and WTDQ.

It belongs to the UDP-glycosyltransferase family. As to expression, expressed in seedlings.

Functionally, glycosyltransferase that glucosylates benzoic acid and derivatives. Substrate preference is benzoic acid &gt; salicylic acid (SA) &gt; 3-hydroxybenzoic acid &gt; 4-hydroxybenzoic acid. Catalyzes the formation of both SA 2-O-beta-D-glucoside (SAG) and SA glucose ester (SGE). Has high affinity for the tryptophan precursor anthranilate. Catalyzes the formation of anthranilate glucose ester. Is the major source of this activity in the plant. This chain is UDP-glycosyltransferase 74F2 (UGT74F2), found in Arabidopsis thaliana (Mouse-ear cress).